We begin with the raw amino-acid sequence, 281 residues long: MKVIKTLSIINFFIFVTFNIKNESKYSNTFINNAYNMSIRRSMEESNPPTGASGRAGAGASGRAGAGASGRAGAGAGAVASAGSGDGAVASAGNGANPGADAKRSTSTPATTTTTTTTNDAEASTSTSSENPNHNNAKTNPKGKEVQEPNKANTETQNNSNVQQDSQTKSNVPPTQDADTKSPTAQPEQAENSAPTAEQTESPELQSAPENKGTGQHGHMHGSRNNHPQNTSDSQKECTDGNKENCGAATSLLNNSSNIASINKFVVLISATLVLSFAIFI.

The signal sequence occupies residues 1–20; that stretch reads MKVIKTLSIINFFIFVTFNI. N22 and N36 each carry an N-linked (GlcNAc...) asparagine glycan. A disordered region spans residues 42–242; sequence SMEESNPPTG…DSQKECTDGN (201 aa). The interval 44–207 is polymorphic region; the sequence is EESNPPTGAS…EQTESPELQS (164 aa). Repeat copies occupy residues 51–58, 59–66, and 67–74. The interval 51 to 74 is 3 X 8 AA tandem repeats of G-A-S-G-R-A-G-A; it reads GASGRAGAGASGRAGAGASGRAGA. The segment covering 54-76 has biased composition (gly residues); that stretch reads GRAGAGASGRAGAGASGRAGAGA. Residues 77-133 are compositionally biased toward low complexity; the sequence is GAVASAGSGDGAVASAGNGANPGADAKRSTSTPATTTTTTTTNDAEASTSTSSENPN. Composition is skewed to polar residues over residues 150-174 and 181-209; these read NKANTETQNNSNVQQDSQTKSNVPP and KSPTAQPEQAENSAPTAEQTESPELQSAP. A glycan (N-linked (GlcNAc...) asparagine) is linked at N158. N230 is a glycosylation site (N-linked (GlcNAc...) asparagine). The cysteines at positions 238 and 246 are disulfide-linked. Residues N254 and N255 are each glycosylated (N-linked (GlcNAc...) asparagine). N255 carries GPI-anchor amidated asparagine lipidation. A propeptide spans 256–281 (removed in mature form); the sequence is SSNIASINKFVVLISATLVLSFAIFI.

Its subcellular location is the cell membrane. Its function is as follows. May play a role in the merozoite attachment to the erythrocyte. This Plasmodium falciparum (isolate thtn / Thailand) protein is Merozoite surface protein 2.